Here is a 469-residue protein sequence, read N- to C-terminus: tRNA(Ile)-lysidine synthase (469 aa).

Residue 26-31 (SGGPDS) participates in ATP binding.

It belongs to the tRNA(Ile)-lysidine synthase family.

The protein resides in the cytoplasm. It carries out the reaction cytidine(34) in tRNA(Ile2) + L-lysine + ATP = lysidine(34) in tRNA(Ile2) + AMP + diphosphate + H(+). Ligates lysine onto the cytidine present at position 34 of the AUA codon-specific tRNA(Ile) that contains the anticodon CAU, in an ATP-dependent manner. Cytidine is converted to lysidine, thus changing the amino acid specificity of the tRNA from methionine to isoleucine. The polypeptide is tRNA(Ile)-lysidine synthase (Clostridium perfringens (strain ATCC 13124 / DSM 756 / JCM 1290 / NCIMB 6125 / NCTC 8237 / Type A)).